A 538-amino-acid polypeptide reads, in one-letter code: Nicotinate phosphoribosyltransferase (538 aa).

Nicotinate-binding residues include Tyr21 and Thr210. The residue at position 213 (His213) is a Phosphohistidine. Arg318 serves as a coordination point for nicotinate. Residue Thr380 coordinates 5-phospho-alpha-D-ribose 1-diphosphate.

It belongs to the NAPRTase family. In terms of assembly, homodimer. Mg(2+) serves as cofactor. The cofactor is Mn(2+). In terms of processing, transiently phosphorylated on a His residue during the reaction cycle. Phosphorylation strongly increases the affinity for substrates and increases the rate of nicotinate D-ribonucleotide production. Dephosphorylation regenerates the low-affinity form of the enzyme, leading to product release. Abundantly expressed in the small intestine, liver and kidney.

It localises to the cytoplasm. Its subcellular location is the cytosol. The enzyme catalyses nicotinate + 5-phospho-alpha-D-ribose 1-diphosphate + ATP + H2O = nicotinate beta-D-ribonucleotide + ADP + phosphate + diphosphate. It functions in the pathway cofactor biosynthesis; NAD(+) biosynthesis; nicotinate D-ribonucleotide from nicotinate: step 1/1. Functionally, catalyzes the first step in the biosynthesis of NAD from nicotinic acid, the ATP-dependent synthesis of beta-nicotinate D-ribonucleotide from nicotinate and 5-phospho-D-ribose 1-phosphate. Helps prevent cellular oxidative stress via its role in NAD biosynthesis. This Mus musculus (Mouse) protein is Nicotinate phosphoribosyltransferase (Naprt).